The sequence spans 301 residues: Lipoyl synthase (301 aa).

Residues cysteine 50, cysteine 55, cysteine 61, cysteine 76, cysteine 80, cysteine 83, and serine 289 each contribute to the [4Fe-4S] cluster site. The Radical SAM core domain maps to tryptophan 62 to arginine 278.

The protein belongs to the radical SAM superfamily. Lipoyl synthase family. [4Fe-4S] cluster serves as cofactor.

The protein localises to the cytoplasm. The enzyme catalyses [[Fe-S] cluster scaffold protein carrying a second [4Fe-4S](2+) cluster] + N(6)-octanoyl-L-lysyl-[protein] + 2 oxidized [2Fe-2S]-[ferredoxin] + 2 S-adenosyl-L-methionine + 4 H(+) = [[Fe-S] cluster scaffold protein] + N(6)-[(R)-dihydrolipoyl]-L-lysyl-[protein] + 4 Fe(3+) + 2 hydrogen sulfide + 2 5'-deoxyadenosine + 2 L-methionine + 2 reduced [2Fe-2S]-[ferredoxin]. It functions in the pathway protein modification; protein lipoylation via endogenous pathway; protein N(6)-(lipoyl)lysine from octanoyl-[acyl-carrier-protein]: step 2/2. Its function is as follows. Catalyzes the radical-mediated insertion of two sulfur atoms into the C-6 and C-8 positions of the octanoyl moiety bound to the lipoyl domains of lipoate-dependent enzymes, thereby converting the octanoylated domains into lipoylated derivatives. The protein is Lipoyl synthase of Roseiflexus sp. (strain RS-1).